We begin with the raw amino-acid sequence, 137 residues long: Large ribosomal subunit protein uL16 (137 aa).

The protein belongs to the universal ribosomal protein uL16 family. Part of the 50S ribosomal subunit.

Its function is as follows. Binds 23S rRNA and is also seen to make contacts with the A and possibly P site tRNAs. The protein is Large ribosomal subunit protein uL16 of Bartonella bacilliformis (strain ATCC 35685 / KC583 / Herrer 020/F12,63).